The primary structure comprises 1354 residues: Phosphoribosylformylglycinamidine synthase (1354 aa).

ATP is bound by residues 327–338, 407–409, and Ala714; these read GATTGTGGRLRD and SGF. The Mg(2+) site is built by Asp715, Glu754, Asn758, and Asp918. ATP is bound at residue Ser920. The Glutamine amidotransferase type-1 domain occupies 1087–1337; it reads VAVLREEGVN…EVSPTQSESP (251 aa). The active-site Nucleophile is the Cys1180. Active-site residues include His1310 and Glu1312.

In the N-terminal section; belongs to the FGAMS family.

The enzyme catalyses N(2)-formyl-N(1)-(5-phospho-beta-D-ribosyl)glycinamide + L-glutamine + ATP + H2O = 2-formamido-N(1)-(5-O-phospho-beta-D-ribosyl)acetamidine + L-glutamate + ADP + phosphate + H(+). Its pathway is purine metabolism; IMP biosynthesis via de novo pathway; 5-amino-1-(5-phospho-D-ribosyl)imidazole from N(2)-formyl-N(1)-(5-phospho-D-ribosyl)glycinamide: step 1/2. Phosphoribosylformylglycinamidine synthase involved in the purines biosynthetic pathway. Catalyzes the ATP-dependent conversion of formylglycinamide ribonucleotide (FGAR) and glutamine to yield formylglycinamidine ribonucleotide (FGAM) and glutamate. Because of its role in metabolisms, is involved in sleep regulation. The protein is Phosphoribosylformylglycinamidine synthase of Drosophila melanogaster (Fruit fly).